Here is a 422-residue protein sequence, read N- to C-terminus: Phospho-N-acetylmuramoyl-pentapeptide-transferase (422 aa).

9 consecutive transmembrane segments (helical) span residues 28–48 (LMAI…FINL), 71–91 (VGVP…PCLL), 95–115 (LHNI…SLGF), 136–156 (IIGQ…SPDV), 211–231 (AGWI…SNGA), 246–266 (AIIG…EFAG), 279–299 (LVIF…YNAY), 313–333 (IGGI…IPIL), and 399–419 (KITV…IITL).

The protein belongs to the glycosyltransferase 4 family. MraY subfamily. Requires Mg(2+) as cofactor.

Its subcellular location is the cell inner membrane. The enzyme catalyses UDP-N-acetyl-alpha-D-muramoyl-L-alanyl-gamma-D-glutamyl-meso-2,6-diaminopimeloyl-D-alanyl-D-alanine + di-trans,octa-cis-undecaprenyl phosphate = di-trans,octa-cis-undecaprenyl diphospho-N-acetyl-alpha-D-muramoyl-L-alanyl-D-glutamyl-meso-2,6-diaminopimeloyl-D-alanyl-D-alanine + UMP. The protein operates within cell wall biogenesis; peptidoglycan biosynthesis. Its function is as follows. Catalyzes the initial step of the lipid cycle reactions in the biosynthesis of the cell wall peptidoglycan: transfers peptidoglycan precursor phospho-MurNAc-pentapeptide from UDP-MurNAc-pentapeptide onto the lipid carrier undecaprenyl phosphate, yielding undecaprenyl-pyrophosphoryl-MurNAc-pentapeptide, known as lipid I. The protein is Phospho-N-acetylmuramoyl-pentapeptide-transferase of Bacteroides fragilis (strain ATCC 25285 / DSM 2151 / CCUG 4856 / JCM 11019 / LMG 10263 / NCTC 9343 / Onslow / VPI 2553 / EN-2).